A 215-amino-acid chain; its full sequence is Large ribosomal subunit protein uL16m (215 aa).

Residues 1–36 constitute a mitochondrion transit peptide; it reads MALQQYNKFPFFFSGILGPTRLNGLQMPPIQTMVRW.

The protein belongs to the universal ribosomal protein uL16 family. As to quaternary structure, component of the mitochondrial large ribosomal subunit (mt-LSU). Mature yeast 74S mitochondrial ribosomes consist of a small (37S) and a large (54S) subunit. The 37S small subunit contains a 15S ribosomal RNA (15S mt-rRNA) and at least 32 different proteins. The 54S large subunit contains a 21S rRNA (21S mt-rRNA) and at least 45 different proteins.

It localises to the mitochondrion. In terms of biological role, component of the mitochondrial ribosome (mitoribosome), a dedicated translation machinery responsible for the synthesis of mitochondrial genome-encoded proteins, including at least some of the essential transmembrane subunits of the mitochondrial respiratory chain. The mitoribosomes are attached to the mitochondrial inner membrane and translation products are cotranslationally integrated into the membrane. The sequence is that of Large ribosomal subunit protein uL16m (mrpl16) from Schizosaccharomyces pombe (strain 972 / ATCC 24843) (Fission yeast).